The following is a 306-amino-acid chain: Curved DNA-binding protein (306 aa).

Residues 5–69 (DYYAIMGVKP…QRRAEYDQLW (65 aa)) form the J domain.

It localises to the cytoplasm. The protein resides in the nucleoid. DNA-binding protein that preferentially recognizes a curved DNA sequence. It is probably a functional analog of DnaJ; displays overlapping activities with DnaJ, but functions under different conditions, probably acting as a molecular chaperone in an adaptive response to environmental stresses other than heat shock. Lacks autonomous chaperone activity; binds native substrates and targets them for recognition by DnaK. Its activity is inhibited by the binding of CbpM. The sequence is that of Curved DNA-binding protein from Citrobacter koseri (strain ATCC BAA-895 / CDC 4225-83 / SGSC4696).